Reading from the N-terminus, the 379-residue chain is Chaperone protein DnaJ (379 aa).

Residues Asp-7–Gly-72 form the J domain. A CR-type zinc finger spans residues Gly-147–Lys-225. Zn(2+) contacts are provided by Cys-160, Cys-163, Cys-177, Cys-180, Cys-199, Cys-202, Cys-213, and Cys-216. CXXCXGXG motif repeat units follow at residues Cys-160 to Gly-167, Cys-177 to Gly-184, Cys-199 to Gly-206, and Cys-213 to Gly-220.

The protein belongs to the DnaJ family. In terms of assembly, homodimer. The cofactor is Zn(2+).

It localises to the cytoplasm. Participates actively in the response to hyperosmotic and heat shock by preventing the aggregation of stress-denatured proteins and by disaggregating proteins, also in an autonomous, DnaK-independent fashion. Unfolded proteins bind initially to DnaJ; upon interaction with the DnaJ-bound protein, DnaK hydrolyzes its bound ATP, resulting in the formation of a stable complex. GrpE releases ADP from DnaK; ATP binding to DnaK triggers the release of the substrate protein, thus completing the reaction cycle. Several rounds of ATP-dependent interactions between DnaJ, DnaK and GrpE are required for fully efficient folding. Also involved, together with DnaK and GrpE, in the DNA replication of plasmids through activation of initiation proteins. The chain is Chaperone protein DnaJ from Treponema denticola (strain ATCC 35405 / DSM 14222 / CIP 103919 / JCM 8153 / KCTC 15104).